The chain runs to 320 residues: 3-oxoacyl-[acyl-carrier-protein] reductase 1, chloroplastic (320 aa).

Residues 1 to 60 (MATTVAATKLTSLKAVKKLGFREIRQVRQWSPLQSAMPHFGMLRCGSRQSFATSTVVKAQ) constitute a chloroplast transit peptide. Residue 82 to 106 (VTGASRGIGKAIALSLGKAGCKVLV) coordinates NADP(+). S214 lines the substrate pocket. Y227 functions as the Proton acceptor in the catalytic mechanism.

The protein belongs to the short-chain dehydrogenases/reductases (SDR) family. In terms of assembly, homotetramer.

The protein localises to the plastid. It localises to the chloroplast. The enzyme catalyses a (3R)-hydroxyacyl-[ACP] + NADP(+) = a 3-oxoacyl-[ACP] + NADPH + H(+). The protein operates within lipid metabolism; fatty acid biosynthesis. The sequence is that of 3-oxoacyl-[acyl-carrier-protein] reductase 1, chloroplastic (gbkr1) from Brassica napus (Rape).